Here is a 445-residue protein sequence, read N- to C-terminus: MERAPPDGPLNASGALAGEAAAAGGARGFSAAWTAVLAALMALLIVATVLGNALVMLAFVADSSLRTQNNFFLLNLAISDFLVGAFCIPLYVPYVLTGRWTFGRGLCKLWLVVDYLLCTSSAFNIVLISYDRFLSVTRAVSYRAQQGDTRRAVRKMLLVWVLAFLLYGPAILSWEYLSGGSSIPEGHCYAEFFYNWYFLITASTLEFFTPFLSVTFFNLSIYLNIQRRTRLRLDGAREAAGPEPPPEAQPSPPPPPGCWGCWQKGHGEAMPLHRYGVGEAAVGAEAGEATLGGGGGGGSVASPTSSSGSSSRGTERPRSLKRGSKPSASSASLEKRMKMVSQSFTQRFRLSRDRKVAKSLAVIVSIFGLCWAPYTLLMIIRAACHGHCVPDYWYETSFWLLWANSAVNPVLYPLCHHSFRRAFTKLLCPQKLKIQPHSSLEHCWK.

The Extracellular segment spans residues 1 to 39 (MERAPPDGPLNASGALAGEAAAAGGARGFSAAWTAVLAA). The N-linked (GlcNAc...) asparagine glycan is linked to Asn11. A helical membrane pass occupies residues 40–60 (LMALLIVATVLGNALVMLAFV). Residues 61 to 70 (ADSSLRTQNN) are Cytoplasmic-facing. A helical membrane pass occupies residues 71–91 (FFLLNLAISDFLVGAFCIPLY). Residues 92–108 (VPYVLTGRWTFGRGLCK) are Extracellular-facing. The cysteines at positions 107 and 188 are disulfide-linked. Residues 109–129 (LWLVVDYLLCTSSAFNIVLIS) form a helical membrane-spanning segment. Residues 130–156 (YDRFLSVTRAVSYRAQQGDTRRAVRKM) are Cytoplasmic-facing. Residues 157–177 (LLVWVLAFLLYGPAILSWEYL) traverse the membrane as a helical segment. Over 178–196 (SGGSSIPEGHCYAEFFYNW) the chain is Extracellular. A helical membrane pass occupies residues 197 to 217 (YFLITASTLEFFTPFLSVTFF). At 218-359 (NLSIYLNIQR…LSRDRKVAKS (142 aa)) the chain is on the cytoplasmic side. Disordered stretches follow at residues 237 to 260 (REAA…GCWG) and 288 to 336 (EATL…LEKR). Positions 242 to 257 (PEPPPEAQPSPPPPPG) are enriched in pro residues. A compositionally biased stretch (gly residues) spans 290–299 (TLGGGGGGGS). Residues 300 to 312 (VASPTSSSGSSSR) are compositionally biased toward low complexity. Residues 360-380 (LAVIVSIFGLCWAPYTLLMII) traverse the membrane as a helical segment. The Extracellular portion of the chain corresponds to 381–395 (RAACHGHCVPDYWYE). Residues 396–416 (TSFWLLWANSAVNPVLYPLCH) form a helical membrane-spanning segment. The Cytoplasmic portion of the chain corresponds to 417–445 (HSFRRAFTKLLCPQKLKIQPHSSLEHCWK). Ser439 carries the post-translational modification Phosphoserine.

Belongs to the G-protein coupled receptor 1 family. As to expression, expressed predominantly in the CNS, with the greatest expression in the thalamus and caudate nucleus. The various isoforms are mainly coexpressed in brain, but their relative expression level varies in a region-specific manner. Isoform 3 and isoform 7 are highly expressed in the thalamus, caudate nucleus and cerebellum while isoform 5 and isoform 6 show a poor expression. Isoform 5 and isoform 6 show a high expression in the amygdala, substantia nigra, cerebral cortex and hypothalamus. Isoform 7 is not found in hypothalamus or substantia nigra.

It is found in the cell membrane. In terms of biological role, the H3 subclass of histamine receptors could mediate the histamine signals in CNS and peripheral nervous system. Signals through the inhibition of adenylate cyclase and displays high constitutive activity (spontaneous activity in the absence of agonist). Agonist stimulation of isoform 3 neither modified adenylate cyclase activity nor induced intracellular calcium mobilization. This chain is Histamine H3 receptor (HRH3), found in Homo sapiens (Human).